A 102-amino-acid chain; its full sequence is NADH-quinone oxidoreductase subunit K (102 aa).

Transmembrane regions (helical) follow at residues 5-25 (LTQY…GIIL), 30-50 (IIII…NLVA), and 62-82 (IFAL…LAIL).

The protein belongs to the complex I subunit 4L family. As to quaternary structure, NDH-1 is composed of 14 different subunits. Subunits NuoA, H, J, K, L, M, N constitute the membrane sector of the complex.

It localises to the cell inner membrane. It carries out the reaction a quinone + NADH + 5 H(+)(in) = a quinol + NAD(+) + 4 H(+)(out). Its function is as follows. NDH-1 shuttles electrons from NADH, via FMN and iron-sulfur (Fe-S) centers, to quinones in the respiratory chain. The immediate electron acceptor for the enzyme in this species is believed to be ubiquinone. Couples the redox reaction to proton translocation (for every two electrons transferred, four hydrogen ions are translocated across the cytoplasmic membrane), and thus conserves the redox energy in a proton gradient. In Beijerinckia indica subsp. indica (strain ATCC 9039 / DSM 1715 / NCIMB 8712), this protein is NADH-quinone oxidoreductase subunit K.